A 285-amino-acid chain; its full sequence is Putative phosphatase MG125 (285 aa).

Residue Asp-8 is the Nucleophile of the active site. Residue Asp-8 participates in Mg(2+) binding. Leu-9 contacts phosphate. Mg(2+) is bound at residue Asp-10. Phosphate contacts are provided by residues 44 to 45 and Lys-205; that span reads TG. Residues Asp-228 and Ser-229 each coordinate Mg(2+). Asn-231 provides a ligand contact to phosphate.

It belongs to the HAD-like hydrolase superfamily. Cof family. Mg(2+) is required as a cofactor.

In Mycoplasma genitalium (strain ATCC 33530 / DSM 19775 / NCTC 10195 / G37) (Mycoplasmoides genitalium), this protein is Putative phosphatase MG125.